The primary structure comprises 347 residues: Neutral protease 2 homolog MGG_10927 (347 aa).

An N-terminal signal peptide occupies residues 1 to 19 (MKYSVGITALLATLAQGAA). A propeptide spanning residues 20–176 (VMSKRDIPLD…RSYLAKRTMV (157 aa)) is cleaved from the precursor. Intrachain disulfides connect cysteine 180/cysteine 250 and cysteine 257/cysteine 275. Zn(2+) is bound at residue histidine 299. Glutamate 300 is an active-site residue. Histidine 303 serves as a coordination point for Zn(2+).

This sequence belongs to the peptidase M35 family. Zn(2+) is required as a cofactor.

It localises to the secreted. The catalysed reaction is Preferential cleavage of bonds with hydrophobic residues in P1'. Also 3-Asn-|-Gln-4 and 8-Gly-|-Ser-9 bonds in insulin B chain.. Secreted metalloproteinase that allows assimilation of proteinaceous substrates. Shows high activities on basic nuclear substrates such as histone and protamine. This Pyricularia oryzae (strain 70-15 / ATCC MYA-4617 / FGSC 8958) (Rice blast fungus) protein is Neutral protease 2 homolog MGG_10927.